Consider the following 338-residue polypeptide: Aspartate-semialdehyde dehydrogenase (338 aa).

NADP(+)-binding positions include threonine 13 to valine 16 and arginine 41 to serine 42. A phosphate-binding site is contributed by arginine 101. Cysteine 130 functions as the Acyl-thioester intermediate in the catalytic mechanism. Residue glutamine 157 participates in substrate binding. Serine 160–glycine 161 contributes to the NADP(+) binding site. Lysine 214 serves as a coordination point for phosphate. Arginine 236 contacts substrate. The active-site Proton acceptor is histidine 243. An NADP(+)-binding site is contributed by glutamine 316.

Belongs to the aspartate-semialdehyde dehydrogenase family. As to quaternary structure, homodimer.

The enzyme catalyses L-aspartate 4-semialdehyde + phosphate + NADP(+) = 4-phospho-L-aspartate + NADPH + H(+). Its pathway is amino-acid biosynthesis; L-lysine biosynthesis via DAP pathway; (S)-tetrahydrodipicolinate from L-aspartate: step 2/4. It participates in amino-acid biosynthesis; L-methionine biosynthesis via de novo pathway; L-homoserine from L-aspartate: step 2/3. The protein operates within amino-acid biosynthesis; L-threonine biosynthesis; L-threonine from L-aspartate: step 2/5. In terms of biological role, catalyzes the NADPH-dependent formation of L-aspartate-semialdehyde (L-ASA) by the reductive dephosphorylation of L-aspartyl-4-phosphate. The chain is Aspartate-semialdehyde dehydrogenase (asd) from Synechocystis sp. (strain ATCC 27184 / PCC 6803 / Kazusa).